The primary structure comprises 183 residues: Threonylcarbamoyl-AMP synthase (183 aa).

The 183-residue stretch at 1–183 folds into the YrdC-like domain; sequence MNREQIADAL…LRTNQLFRQG (183 aa).

The protein belongs to the SUA5 family. TsaC subfamily.

The protein resides in the cytoplasm. It catalyses the reaction L-threonine + hydrogencarbonate + ATP = L-threonylcarbamoyladenylate + diphosphate + H2O. Functionally, required for the formation of a threonylcarbamoyl group on adenosine at position 37 (t(6)A37) in tRNAs that read codons beginning with adenine. Catalyzes the conversion of L-threonine, HCO(3)(-)/CO(2) and ATP to give threonylcarbamoyl-AMP (TC-AMP) as the acyladenylate intermediate, with the release of diphosphate. This chain is Threonylcarbamoyl-AMP synthase, found in Haemophilus influenzae (strain ATCC 51907 / DSM 11121 / KW20 / Rd).